Consider the following 99-residue polypeptide: Sarcosine oxidase subunit delta (99 aa).

Zn(2+)-binding residues include Cys6, Cys9, His59, and Cys63.

This sequence belongs to the SoxD family. As to quaternary structure, heterotetramer composed of subunits alpha (SoxA), beta (SoxB), gamma (SoxG) and delta (SoxD).

The protein resides in the cytoplasm. It carries out the reaction sarcosine + (6S)-5,6,7,8-tetrahydrofolate + O2 = (6R)-5,10-methylene-5,6,7,8-tetrahydrofolate + glycine + H2O2. The catalysed reaction is sarcosine + O2 + H2O = formaldehyde + glycine + H2O2. Its activity is regulated as follows. Inhibited by Zn(2+), Cu(2+), Cd(2+), Hg(2+), Ag(+), p-chloromercuribenzoate (p-CMB), iodoacetamide, N-ethylmaleimide, CN(-), o-phenanthroline and sodium lauryl sulfate. In the presence of tetrahydrofolate, catalyzes the oxidative demethylation of sarcosine to yield glycine, 5,10-methylenetetrahydrofolate and hydrogen peroxide. In the absence of tetrahydrofolate, catalyzes the oxidative demethylation of sarcosine to yield glycine, formaldehyde and hydrogen peroxide. Can also use N-methyl-L-alanine and N-ethyl-L-glycine. Is very specific for oxygen as an acceptor. The sequence is that of Sarcosine oxidase subunit delta from Corynebacterium sp. (strain U-96).